Here is a 397-residue protein sequence, read N- to C-terminus: Acetate kinase (397 aa).

Residue Asn-7 participates in Mg(2+) binding. Lys-14 provides a ligand contact to ATP. Residue Arg-90 coordinates substrate. Asp-147 (proton donor/acceptor) is an active-site residue. Residues 207-211 (HLGNG), 282-284 (DFR), and 330-334 (GIGEN) each bind ATP. Glu-384 lines the Mg(2+) pocket.

Belongs to the acetokinase family. In terms of assembly, homodimer. Requires Mg(2+) as cofactor. It depends on Mn(2+) as a cofactor.

The protein resides in the cytoplasm. The catalysed reaction is acetate + ATP = acetyl phosphate + ADP. It functions in the pathway metabolic intermediate biosynthesis; acetyl-CoA biosynthesis; acetyl-CoA from acetate: step 1/2. Its function is as follows. Catalyzes the formation of acetyl phosphate from acetate and ATP. Can also catalyze the reverse reaction. This chain is Acetate kinase, found in Agathobacter rectalis (strain ATCC 33656 / DSM 3377 / JCM 17463 / KCTC 5835 / VPI 0990) (Eubacterium rectale).